The primary structure comprises 288 residues: MKMKAYAKINIALDAIGKREDNYHLLRMIMQTVDLYDVIDIEKSNDSNISISCNKHYVSTDERNLAYKAAVLFRDEFNIKDGVKINIKKNIPVAAGMAGGSTNAAAVLVIMNKLFNVNASLEVLKEIGLKIGADVPYCIEGGTALCEGIGEIITPLKPFENKILVVLKPNFGVSTKEVYTNLDINKIRKHVNIEGLIQAMENDDLDYVSKNMKNVLENVTLKKHTILKNIKEDMRKSGALGAMMSGSGPTVFAFFDDMLTAQRAFEFLKGKYKYSDVYITRTINSNNL.

Lysine 8 is an active-site residue. 92–102 lines the ATP pocket; the sequence is PVAAGMAGGST. The active site involves aspartate 134.

Belongs to the GHMP kinase family. IspE subfamily.

It carries out the reaction 4-CDP-2-C-methyl-D-erythritol + ATP = 4-CDP-2-C-methyl-D-erythritol 2-phosphate + ADP + H(+). It functions in the pathway isoprenoid biosynthesis; isopentenyl diphosphate biosynthesis via DXP pathway; isopentenyl diphosphate from 1-deoxy-D-xylulose 5-phosphate: step 3/6. In terms of biological role, catalyzes the phosphorylation of the position 2 hydroxy group of 4-diphosphocytidyl-2C-methyl-D-erythritol. The protein is 4-diphosphocytidyl-2-C-methyl-D-erythritol kinase of Clostridium perfringens (strain 13 / Type A).